Here is a 263-residue protein sequence, read N- to C-terminus: Putative cysteine-rich repeat secretory protein 31 (263 aa).

The first 32 residues, 1-32 (MHNSYSLSKRLVLVLFLAVVATQLFLIRNVSS), serve as a signal peptide directing secretion. 2 consecutive Gnk2-homologous domains span residues 39–141 (YLHH…AIEV) and 146–260 (YDNN…FYPF).

This sequence belongs to the cysteine-rich repeat secretory protein family.

The protein localises to the secreted. In Arabidopsis thaliana (Mouse-ear cress), this protein is Putative cysteine-rich repeat secretory protein 31 (CRRSP31).